Consider the following 549-residue polypeptide: Glucose-6-phosphate isomerase (549 aa).

N6-acetyllysine is present on residues K80, K228, and K234. Residue E355 is the Proton donor of the active site. Residues H386 and K514 contribute to the active site.

It belongs to the GPI family.

The protein resides in the cytoplasm. The enzyme catalyses alpha-D-glucose 6-phosphate = beta-D-fructose 6-phosphate. It functions in the pathway carbohydrate biosynthesis; gluconeogenesis. Its pathway is carbohydrate degradation; glycolysis; D-glyceraldehyde 3-phosphate and glycerone phosphate from D-glucose: step 2/4. Catalyzes the reversible isomerization of glucose-6-phosphate to fructose-6-phosphate. The sequence is that of Glucose-6-phosphate isomerase from Shigella flexneri.